The sequence spans 478 residues: Alpha-1,3-mannosyl-glycoprotein 4-beta-N-acetylglucosaminyltransferase C (478 aa).

The Cytoplasmic segment spans residues 1–23 (MFKFHQMKHIFEILDKMRCLRKR). A helical; Signal-anchor for type II membrane protein transmembrane segment spans residues 24–44 (STVSFLGVLVIFLLFMNLYIE). The Lumenal segment spans residues 45 to 478 (DSYVLEGDKQ…IIRSISIWTS (434 aa)). 2 N-linked (GlcNAc...) asparagine glycosylation sites follow: Asn-84 and Asn-215.

Belongs to the glycosyltransferase 54 family. It depends on a divalent metal cation as a cofactor.

Its subcellular location is the golgi apparatus membrane. The catalysed reaction is N(4)-{beta-D-GlcNAc-(1-&gt;2)-alpha-D-Man-(1-&gt;3)-[beta-D-GlcNAc-(1-&gt;2)-alpha-D-Man-(1-&gt;6)]-beta-D-Man-(1-&gt;4)-beta-D-GlcNAc-(1-&gt;4)-beta-D-GlcNAc}-L-asparaginyl-[protein] + UDP-N-acetyl-alpha-D-glucosamine = N(4)-{beta-D-GlcNAc-(1-&gt;2)-[beta-D-GlcNAc-(1-&gt;4)]-alpha-D-Man-(1-&gt;3)-[beta-D-GlcNAc-(1-&gt;2)-alpha-D-Man-(1-&gt;6)]-beta-D-Man-(1-&gt;4)-beta-D-GlcNAc-(1-&gt;4)-beta-D-GlcNAc}-L-asparaginyl-[protein] + UDP + H(+). The protein operates within protein modification; protein glycosylation. Glycosyltransferase that participates in the transfer of N-acetylglucosamine (GlcNAc) to the core mannose residues of N-linked glycans. Catalyzes the formation of the GlcNAcbeta1-4 branch on the GlcNAcbeta1-2Manalpha1-3 arm of the core structure of N-linked glycans. Essential for the production of tri- and tetra-antennary N-linked sugar chains. Does not catalyze the transfer of GlcNAc to the Manalpha1-6 arm to form GlcNAcBeta1-4Manalpha1-6 linkage ('GnT-VI' activity). The polypeptide is Alpha-1,3-mannosyl-glycoprotein 4-beta-N-acetylglucosaminyltransferase C (MGAT4C) (Macaca fascicularis (Crab-eating macaque)).